The chain runs to 369 residues: UDP-N-acetylglucosamine--N-acetylmuramyl-(pentapeptide) pyrophosphoryl-undecaprenol N-acetylglucosamine transferase (369 aa).

UDP-N-acetyl-alpha-D-glucosamine is bound by residues 16–18 (TGG), Asn130, Arg171, Ser203, Ile253, and Gln298.

Belongs to the glycosyltransferase 28 family. MurG subfamily.

It localises to the cell inner membrane. It carries out the reaction di-trans,octa-cis-undecaprenyl diphospho-N-acetyl-alpha-D-muramoyl-L-alanyl-D-glutamyl-meso-2,6-diaminopimeloyl-D-alanyl-D-alanine + UDP-N-acetyl-alpha-D-glucosamine = di-trans,octa-cis-undecaprenyl diphospho-[N-acetyl-alpha-D-glucosaminyl-(1-&gt;4)]-N-acetyl-alpha-D-muramoyl-L-alanyl-D-glutamyl-meso-2,6-diaminopimeloyl-D-alanyl-D-alanine + UDP + H(+). The protein operates within cell wall biogenesis; peptidoglycan biosynthesis. Its function is as follows. Cell wall formation. Catalyzes the transfer of a GlcNAc subunit on undecaprenyl-pyrophosphoryl-MurNAc-pentapeptide (lipid intermediate I) to form undecaprenyl-pyrophosphoryl-MurNAc-(pentapeptide)GlcNAc (lipid intermediate II). The polypeptide is UDP-N-acetylglucosamine--N-acetylmuramyl-(pentapeptide) pyrophosphoryl-undecaprenol N-acetylglucosamine transferase (Cytophaga hutchinsonii (strain ATCC 33406 / DSM 1761 / CIP 103989 / NBRC 15051 / NCIMB 9469 / D465)).